Consider the following 445-residue polypeptide: Argininosuccinate synthase (445 aa).

ATP is bound by residues 17–25 and Ala-43; that span reads AFSGGLDTS. An L-citrulline-binding site is contributed by Tyr-99. 2 residues coordinate ATP: Gly-129 and Thr-131. Residues Thr-131, Asn-135, and Asp-136 each contribute to the L-aspartate site. L-citrulline is bound at residue Asn-135. Asp-136 contacts ATP. The L-citrulline site is built by Arg-139 and Ser-192. Asp-194 contacts ATP. The L-citrulline site is built by Thr-201, Glu-203, and Glu-280.

The protein belongs to the argininosuccinate synthase family. Type 2 subfamily. Homotetramer.

The protein localises to the cytoplasm. It catalyses the reaction L-citrulline + L-aspartate + ATP = 2-(N(omega)-L-arginino)succinate + AMP + diphosphate + H(+). It functions in the pathway amino-acid biosynthesis; L-arginine biosynthesis; L-arginine from L-ornithine and carbamoyl phosphate: step 2/3. This is Argininosuccinate synthase from Rhodopseudomonas palustris (strain BisA53).